The following is a 327-amino-acid chain: MQFIDQANIILKAGKGGNGIVSFRREKFVPAGGPSGGNGGRGGSIILVADNNLQTLLDFKFKREIIAEDGCKGGPNKRSGASGEDTILKVPCGTEIRDFKTGIILGDLTKNKESLTIAIGGRGGHGNAYYLSNQNRAPESFTEGQDGEIWEVQLELKLLAEVGIIGLPNAGKSTLISVLSSARPKIANYPFTTLIPNLGVVRKVDGNGCLFADIPGLISGAADGVGLGHDFLRHIQRTKILVHLIDSIAENPIHDFEIIEQELRKYGKGLIDKERIIVLNKMELVDDDYLQIITKKLEELSKKKVLAISSSLKKGLSSLLFEVWKRI.

An Obg domain is found at 1 to 159; the sequence is MQFIDQANII…WEVQLELKLL (159 aa). Residues 160 to 327 form the OBG-type G domain; the sequence is AEVGIIGLPN…SLLFEVWKRI (168 aa). ATP is bound by residues 166–173, 191–195, 213–216, 280–283, and 309–311; these read GLPNAGKS, FTTLI, DIPG, NKME, and SSS. Residues Ser-173 and Thr-193 each contribute to the Mg(2+) site.

It belongs to the TRAFAC class OBG-HflX-like GTPase superfamily. OBG GTPase family. In terms of assembly, monomer. Mg(2+) serves as cofactor.

The protein resides in the cytoplasm. In terms of biological role, an essential GTPase which binds GTP, GDP and possibly (p)ppGpp with moderate affinity, with high nucleotide exchange rates and a fairly low GTP hydrolysis rate. Plays a role in control of the cell cycle, stress response, ribosome biogenesis and in those bacteria that undergo differentiation, in morphogenesis control. The polypeptide is GTPase Obg (Prochlorococcus marinus (strain MIT 9312)).